Consider the following 347-residue polypeptide: Selenide, water dikinase (347 aa).

Cys-16 is a catalytic residue. Residues Lys-19 and 47-49 each bind ATP; that span reads TRD. Position 50 (Asp-50) interacts with Mg(2+). Residues Asp-67, Asp-90, and 138 to 140 contribute to the ATP site; that span reads GHS. Position 90 (Asp-90) interacts with Mg(2+). Residue Asp-226 participates in Mg(2+) binding.

This sequence belongs to the selenophosphate synthase 1 family. Class I subfamily. As to quaternary structure, homodimer. Requires Mg(2+) as cofactor.

It carries out the reaction hydrogenselenide + ATP + H2O = selenophosphate + AMP + phosphate + 2 H(+). Functionally, synthesizes selenophosphate from selenide and ATP. The sequence is that of Selenide, water dikinase from Photorhabdus laumondii subsp. laumondii (strain DSM 15139 / CIP 105565 / TT01) (Photorhabdus luminescens subsp. laumondii).